Here is a 401-residue protein sequence, read N- to C-terminus: Argininosuccinate synthase (401 aa).

Residues A10 to S18 and A38 contribute to the ATP site. Y89 lines the L-citrulline pocket. ATP is bound at residue G119. 3 residues coordinate L-aspartate: T121, N125, and D126. N125 serves as a coordination point for L-citrulline. L-citrulline is bound by residues R129, S177, S186, E262, and Y274.

The protein belongs to the argininosuccinate synthase family. Type 1 subfamily. As to quaternary structure, homotetramer.

It is found in the cytoplasm. The enzyme catalyses L-citrulline + L-aspartate + ATP = 2-(N(omega)-L-arginino)succinate + AMP + diphosphate + H(+). The protein operates within amino-acid biosynthesis; L-arginine biosynthesis; L-arginine from L-ornithine and carbamoyl phosphate: step 2/3. This is Argininosuccinate synthase from Synechococcus sp. (strain CC9311).